The following is a 491-amino-acid chain: Glutamyl-tRNA(Gln) amidotransferase subunit A (491 aa).

Active-site charge relay system residues include K76 and S154. S178 functions as the Acyl-ester intermediate in the catalytic mechanism.

This sequence belongs to the amidase family. GatA subfamily. Heterotrimer of A, B and C subunits.

The enzyme catalyses L-glutamyl-tRNA(Gln) + L-glutamine + ATP + H2O = L-glutaminyl-tRNA(Gln) + L-glutamate + ADP + phosphate + H(+). Allows the formation of correctly charged Gln-tRNA(Gln) through the transamidation of misacylated Glu-tRNA(Gln) in organisms which lack glutaminyl-tRNA synthetase. The reaction takes place in the presence of glutamine and ATP through an activated gamma-phospho-Glu-tRNA(Gln). The chain is Glutamyl-tRNA(Gln) amidotransferase subunit A from Cereibacter sphaeroides (strain ATCC 17023 / DSM 158 / JCM 6121 / CCUG 31486 / LMG 2827 / NBRC 12203 / NCIMB 8253 / ATH 2.4.1.) (Rhodobacter sphaeroides).